Reading from the N-terminus, the 621-residue chain is Glutathione-regulated potassium-efflux system protein KefC (621 aa).

A run of 12 helical transmembrane segments spans residues 4–24 (HTLI…PIAV), 26–46 (LGLG…PWGL), 54–74 (AILH…GLEL), 90–110 (GALQ…LLGL), 114–134 (VAEL…MQAM), 149–169 (FAVL…IPLL), 178–198 (LVAF…VVAL), 218–238 (VFSA…EEVG), 270–290 (GLLL…GTLV), 294–314 (LRIV…LWLI), 326–346 (RWFA…FGAA), and 359–379 (ALTL…VLLT). Positions 399-518 (QPRVIVAGFG…AGVEAPERET (120 aa)) constitute an RCK N-terminal domain. A disordered region spans residues 598–621 (GWQGTEEGRHTGDIADEPENKPSA).

Belongs to the monovalent cation:proton antiporter 2 (CPA2) transporter (TC 2.A.37) family. KefC subfamily. In terms of assembly, homodimer. Interacts with the regulatory subunit KefF.

Its subcellular location is the cell inner membrane. Functionally, pore-forming subunit of a potassium efflux system that confers protection against electrophiles. Catalyzes K(+)/H(+) antiport. The chain is Glutathione-regulated potassium-efflux system protein KefC from Klebsiella pneumoniae (strain 342).